Reading from the N-terminus, the 382-residue chain is Galactokinase (382 aa).

Glutamate 34–aspartate 37 is a binding site for substrate. Glycine 124–serine 130 is an ATP binding site. The Mg(2+) site is built by serine 130 and glutamate 162. The active-site Proton acceptor is aspartate 174. Residue tyrosine 223 coordinates substrate.

This sequence belongs to the GHMP kinase family. GalK subfamily.

Its subcellular location is the cytoplasm. The catalysed reaction is alpha-D-galactose + ATP = alpha-D-galactose 1-phosphate + ADP + H(+). It participates in carbohydrate metabolism; galactose metabolism. In terms of biological role, catalyzes the transfer of the gamma-phosphate of ATP to D-galactose to form alpha-D-galactose-1-phosphate (Gal-1-P). This Salmonella arizonae (strain ATCC BAA-731 / CDC346-86 / RSK2980) protein is Galactokinase.